The primary structure comprises 1130 residues: Sterol regulatory element-binding protein 2 (1130 aa).

The transcriptional activation (acidic) stretch occupies residues methionine 1–leucine 50. Residues methionine 1–arginine 470 lie on the Cytoplasmic side of the membrane. The disordered stretch occupies residues serine 53–glutamine 133. The span at proline 55 to glycine 64 shows a compositional bias: gly residues. Polar residues predominate over residues arginine 83–phenylalanine 93. Positions serine 94 to alanine 104 are enriched in low complexity. The span at proline 111–proline 131 shows a compositional bias: pro residues. Residues glutamine 226–glycine 480 are interaction with LMNA. Residues glutamate 319 to leucine 369 form the bHLH domain. Residues leucine 369–asparagine 390 are leucine-zipper. Lysine 453 participates in a covalent cross-link: Glycyl lysine isopeptide (Lys-Gly) (interchain with G-Cter in SUMO2). Residues isoleucine 471–glutamine 491 traverse the membrane as a helical segment. At tryptophan 492–aspartate 522 the chain is on the lumenal side. A helical transmembrane segment spans residues tryptophan 523–valine 543. Topologically, residues lysine 544–serine 1130 are cytoplasmic. Serine 1087 is subject to Phosphoserine.

It belongs to the SREBP family. Forms a tight complex with SCAP, the SCAP-SREBP complex, in the endoplasmic reticulum membrane and the Golgi apparatus. Interacts with PAQR3; the interaction anchors the SCAP-SREBP complex to the Golgi apparatus in low cholesterol conditions. Interacts (via C-terminal domain) with RNF139. As to quaternary structure, homodimer; efficient DNA binding of the soluble transcription factor fragment requires dimerization with another bHLH protein. Interacts with LMNA. Processed in the Golgi apparatus, releasing the protein from the membrane. At low cholesterol the SCAP-SREBP complex is recruited into COPII vesicles for export from the endoplasmic reticulum. In the Golgi, complex SREBPs are cleaved sequentially by site-1 (MBTPS1, S1P) and site-2 (MBTPS2, S2P) proteases. The first cleavage by site-1 protease occurs within the luminal loop, the second cleavage by site-2 protease occurs within the first transmembrane domain, releasing the transcription factor from the Golgi membrane. Apoptosis triggers cleavage by the cysteine proteases caspase-3 and caspase-7. Cleavage and activation is induced by mediated cholesterol efflux. In terms of processing, phosphorylated by AMPK, leading to suppress protein processing and nuclear translocation, and repress target gene expression. Post-translationally, SCAP-free SREBF2 is ubiquitinated by the BCR(ARMC5) complex, leading to its degradation. Ubiquitinated; the nuclear form has a rapid turnover and is rapidly ubiquitinated and degraded by the proteasome in the nucleus.

The protein resides in the endoplasmic reticulum membrane. The protein localises to the golgi apparatus membrane. Its subcellular location is the cytoplasmic vesicle. It localises to the COPII-coated vesicle membrane. It is found in the nucleus. Activation by cleavage is down-regulated upon activation of SIRT3-dependent PRKAA1/AMPK-alpha signaling cascade which leads to inhibition of ATP-consuming lipogenesis to restore cellular energy balance. In terms of biological role, precursor of the transcription factor form (Processed sterol regulatory element-binding protein 2), which is embedded in the endoplasmic reticulum membrane. Low sterol concentrations promote processing of this form, releasing the transcription factor form that translocates into the nucleus and activates transcription of genes involved in cholesterol biosynthesis. Key transcription factor that regulates expression of genes involved in cholesterol biosynthesis. Binds to the sterol regulatory element 1 (SRE-1) (5'-ATCACCCCAC-3'). Has dual sequence specificity binding to both an E-box motif (5'-ATCACGTGA-3') and to SRE-1 (5'-ATCACCCCAC-3'). Regulates transcription of genes related to cholesterol synthesis pathway. This chain is Sterol regulatory element-binding protein 2, found in Mus musculus (Mouse).